The primary structure comprises 67 residues: Alpha-conotoxin-like Pu1.1 (67 aa).

The first 21 residues, Met1–Ser21, serve as a signal peptide directing secretion. Positions Phe22–Arg46 are excised as a propeptide. Gln47 bears the Pyrrolidone carboxylic acid mark. 2 disulfides stabilise this stretch: Cys49–Cys55 and Cys50–Cys63. Positions Asn51–Pro53 are lacks the Ser-Xaa-Pro motif that is crucial for potent interaction with nAChR. The residue at position 63 (Cys63) is a Cysteine amide.

This sequence belongs to the conotoxin A superfamily. In terms of tissue distribution, expressed by the venom duct.

It localises to the secreted. Functionally, alpha-conotoxins act on postsynaptic membranes, they bind to the nicotinic acetylcholine receptors (nAChR) and thus inhibit them. Has possibly a distinct nAChR binding mode from other alpha-conotoxins, due to a different three residue motif (lacks the Ser-Xaa-Pro motif). The polypeptide is Alpha-conotoxin-like Pu1.1 (Conus pulicarius (Flea-bitten cone)).